We begin with the raw amino-acid sequence, 477 residues long: 3-isopropylmalate dehydratase large subunit (477 aa).

[4Fe-4S] cluster-binding residues include C352, C413, and C416.

Belongs to the aconitase/IPM isomerase family. LeuC type 1 subfamily. In terms of assembly, heterodimer of LeuC and LeuD. [4Fe-4S] cluster is required as a cofactor.

It carries out the reaction (2R,3S)-3-isopropylmalate = (2S)-2-isopropylmalate. It participates in amino-acid biosynthesis; L-leucine biosynthesis; L-leucine from 3-methyl-2-oxobutanoate: step 2/4. Catalyzes the isomerization between 2-isopropylmalate and 3-isopropylmalate, via the formation of 2-isopropylmaleate. The chain is 3-isopropylmalate dehydratase large subunit from Pseudomonas putida (strain ATCC 47054 / DSM 6125 / CFBP 8728 / NCIMB 11950 / KT2440).